Consider the following 147-residue polypeptide: Large ribosomal subunit protein uL13 (147 aa).

It belongs to the universal ribosomal protein uL13 family. Part of the 50S ribosomal subunit.

Functionally, this protein is one of the early assembly proteins of the 50S ribosomal subunit, although it is not seen to bind rRNA by itself. It is important during the early stages of 50S assembly. The polypeptide is Large ribosomal subunit protein uL13 (Nocardioides sp. (strain ATCC BAA-499 / JS614)).